The chain runs to 86 residues: Exodeoxyribonuclease 7 small subunit (86 aa).

The disordered stretch occupies residues 1 to 26 (MQDELFETEKIPPKNTKNTKNAPKKS).

Belongs to the XseB family. In terms of assembly, heterooligomer composed of large and small subunits.

Its subcellular location is the cytoplasm. It carries out the reaction Exonucleolytic cleavage in either 5'- to 3'- or 3'- to 5'-direction to yield nucleoside 5'-phosphates.. Bidirectionally degrades single-stranded DNA into large acid-insoluble oligonucleotides, which are then degraded further into small acid-soluble oligonucleotides. The protein is Exodeoxyribonuclease 7 small subunit of Helicobacter pylori (strain ATCC 700392 / 26695) (Campylobacter pylori).